We begin with the raw amino-acid sequence, 315 residues long: Acetyl-coenzyme A carboxylase carboxyl transferase subunit alpha (315 aa).

One can recognise a CoA carboxyltransferase C-terminal domain in the interval 38–292; it reads RLQKKSNELT…KLRLKEDLAE (255 aa).

It belongs to the AccA family. Acetyl-CoA carboxylase is a heterohexamer composed of biotin carboxyl carrier protein (AccB), biotin carboxylase (AccC) and two subunits each of ACCase subunit alpha (AccA) and ACCase subunit beta (AccD).

The protein localises to the cytoplasm. It carries out the reaction N(6)-carboxybiotinyl-L-lysyl-[protein] + acetyl-CoA = N(6)-biotinyl-L-lysyl-[protein] + malonyl-CoA. It functions in the pathway lipid metabolism; malonyl-CoA biosynthesis; malonyl-CoA from acetyl-CoA: step 1/1. Its function is as follows. Component of the acetyl coenzyme A carboxylase (ACC) complex. First, biotin carboxylase catalyzes the carboxylation of biotin on its carrier protein (BCCP) and then the CO(2) group is transferred by the carboxyltransferase to acetyl-CoA to form malonyl-CoA. In Haemophilus influenzae (strain PittEE), this protein is Acetyl-coenzyme A carboxylase carboxyl transferase subunit alpha.